Consider the following 170-residue polypeptide: Adenine phosphoribosyltransferase (170 aa).

This sequence belongs to the purine/pyrimidine phosphoribosyltransferase family. As to quaternary structure, homodimer.

It is found in the cytoplasm. The catalysed reaction is AMP + diphosphate = 5-phospho-alpha-D-ribose 1-diphosphate + adenine. The protein operates within purine metabolism; AMP biosynthesis via salvage pathway; AMP from adenine: step 1/1. Functionally, catalyzes a salvage reaction resulting in the formation of AMP, that is energically less costly than de novo synthesis. This Fusobacterium nucleatum subsp. nucleatum (strain ATCC 25586 / DSM 15643 / BCRC 10681 / CIP 101130 / JCM 8532 / KCTC 2640 / LMG 13131 / VPI 4355) protein is Adenine phosphoribosyltransferase.